Consider the following 290-residue polypeptide: Bifunctional protein FolD (290 aa).

NADP(+) is bound by residues 164 to 166, Ser-193, and Ile-234; that span reads GRS.

It belongs to the tetrahydrofolate dehydrogenase/cyclohydrolase family. Homodimer.

It carries out the reaction (6R)-5,10-methylene-5,6,7,8-tetrahydrofolate + NADP(+) = (6R)-5,10-methenyltetrahydrofolate + NADPH. The enzyme catalyses (6R)-5,10-methenyltetrahydrofolate + H2O = (6R)-10-formyltetrahydrofolate + H(+). Its pathway is one-carbon metabolism; tetrahydrofolate interconversion. Its function is as follows. Catalyzes the oxidation of 5,10-methylenetetrahydrofolate to 5,10-methenyltetrahydrofolate and then the hydrolysis of 5,10-methenyltetrahydrofolate to 10-formyltetrahydrofolate. In Cytophaga hutchinsonii (strain ATCC 33406 / DSM 1761 / CIP 103989 / NBRC 15051 / NCIMB 9469 / D465), this protein is Bifunctional protein FolD.